A 593-amino-acid polypeptide reads, in one-letter code: Translocon at the outer membrane of chloroplasts 64 (593 aa).

The Chloroplast intermembrane portion of the chain corresponds to 1-4; that stretch reads MKSM. Residues 5 to 25 form a helical membrane-spanning segment; sequence ASPSSQIWVILGLGLAGIYVL. The Cytoplasmic segment spans residues 26 to 144; the sequence is TRKLTQAVKE…NPAVPNRVPG (119 aa). A helical transmembrane segment spans residues 145–165; sequence GSSSGAAVAVAANFVDFSLGV. Residues 166–403 are Chloroplast intermembrane-facing; sequence DTSGGVRVPA…LSHDYQSRAL (238 aa). Residues 404-424 form a helical membrane-spanning segment; sequence SLLSIASISGCCQVTVPLGFF. Over 425–593 the chain is Cytoplasmic; that stretch reads DKNPVSVSLI…SAERLRKLFQ (169 aa). TPR repeat units follow at residues 477 to 510, 511 to 544, and 545 to 578; these read AEIS…CGNN, ATYY…DKKN, and VKAY…EPTN.

In terms of assembly, part of the Toc complex and of the intermembrane space complex. Interacts with TOC12, TIC22 and with the cytosolic domain of TOC34 in a GTP dependent manner. Interacts (via TPR region) with HSP90 and with HSP70 with low efficiency.

It localises to the plastid. The protein resides in the chloroplast outer membrane. Its function is as follows. Chaperone receptor mediating Hsp90-dependent protein targeting to chloroplasts. Bi-functional preprotein receptor acting on both sides of the membrane. This chain is Translocon at the outer membrane of chloroplasts 64 (TOC64), found in Pisum sativum (Garden pea).